The primary structure comprises 932 residues: Protocadherin gamma-A3 (932 aa).

The N-terminal stretch at 1–29 (MTNCLSFRNGRGLALLCALLGTLCETGSG) is a signal peptide. Cadherin domains follow at residues 30–133 (QIRY…APNF), 134–242 (PTEE…PPMF), 243–347 (TQPE…APEI), 348–452 (TITS…PPTF), 453–562 (PHLS…APEI), and 570–682 (DGST…EPSA). Over 30 to 692 (QIRYSVSEEL…KPNDSDLTLY (663 aa)) the chain is Extracellular. Residues N265, N419, and N545 are each glycosylated (N-linked (GlcNAc...) asparagine). Residue N685 is glycosylated (N-linked (GlcNAc...) asparagine). Residues 693 to 713 (LVVAVAAVSCVFLAFVIVLLA) form a helical membrane-spanning segment. Residues 714 to 932 (LRLRRWHKSR…KKKSGKKEKK (219 aa)) lie on the Cytoplasmic side of the membrane. 2 disordered regions span residues 805–841 (NLLQ…WPNN) and 902–932 (ATLT…KEKK). Residues 922–932 (NKKKSGKKEKK) show a composition bias toward basic residues.

It localises to the cell membrane. In terms of biological role, potential calcium-dependent cell-adhesion protein. May be involved in the establishment and maintenance of specific neuronal connections in the brain. This Homo sapiens (Human) protein is Protocadherin gamma-A3 (PCDHGA3).